A 721-amino-acid chain; its full sequence is MSSNNAGESDGTGPALPTVWPGNAYPLGATYDGAGTNFSLFSEIAEKVELCLIDEDGVESRIPLDEVDGYVWHAYLPNITPGQRYGFRVHGPFDPAAGHRCDPSKLLLDPYGKSFHGDFTFGQALYSYDVNAVDPDSTPPMVDSLGHTMTSVVINPFFDWAYDRSPRTPYHETVIYEAHVKGMTQTHPSIPPELRGTYAGLAHPVIIDHLNELNVTAVELMPVHQFLHDSRLLDLGLRNYWGYNTFGFFAPHHQYASTRQAGSAVAEFKTMVRSLHEAGIEVILDVVYNHTAEGNHLGPTINFRGIDNTAYYRLMDHDLRFYKDFTGTGNSLNARHPHTLQLIMDSLRYWVIEMHVDGFRFDLASTLARELHDVDRLSAFFDLVQQDPVVSQVKLIAEPWDVGEGGYQVGNFPGLWTEWNGKYRDTVRDYWRGEPATLGEFASRLTGSSDLYEATGRRPSASINFVTAHDGFTLNDLVSYNDKHNEANGENNRDGESYNRSWNCGVEGPTDDPDILALRARQMRNMWATLMVSQGTPMIAHGDEIGRTQYGNNNVYCQDSELSWMDWSLVDKNADLLAFARKATTLRKNHKVFRRRRFFEGEPIRSGDEVRDIAWLTPSGREMTHEDWGRGFDRCVAVFLNGEAITAPDARGERVVDDSFLLCFNAHDHDVEFVMPHDGYAQQWTGELDTNDPVGDIDLTVTATDTFSVPARSLLVLRKTL.

Asp362 (nucleophile) is an active-site residue. Glu398 functions as the Proton donor in the catalytic mechanism.

It belongs to the glycosyl hydrolase 13 family.

The protein is Glycogen operon protein GlgX homolog (glgX) of Mycobacterium bovis (strain ATCC BAA-935 / AF2122/97).